Consider the following 221-residue polypeptide: UPF0502 protein PSPA7_1674 (221 aa).

Belongs to the UPF0502 family.

This chain is UPF0502 protein PSPA7_1674, found in Pseudomonas paraeruginosa (strain DSM 24068 / PA7) (Pseudomonas aeruginosa (strain PA7)).